Reading from the N-terminus, the 344-residue chain is Phenylalanine--tRNA ligase alpha subunit (344 aa).

Position 261 (E261) interacts with Mg(2+).

It belongs to the class-II aminoacyl-tRNA synthetase family. Phe-tRNA synthetase alpha subunit type 1 subfamily. Tetramer of two alpha and two beta subunits. Mg(2+) is required as a cofactor.

Its subcellular location is the cytoplasm. It catalyses the reaction tRNA(Phe) + L-phenylalanine + ATP = L-phenylalanyl-tRNA(Phe) + AMP + diphosphate + H(+). The polypeptide is Phenylalanine--tRNA ligase alpha subunit (Ehrlichia ruminantium (strain Gardel)).